The following is a 124-amino-acid chain: Fluoride-specific ion channel FluC (124 aa).

The next 4 membrane-spanning stretches (helical) occupy residues 4-24, 36-56, 63-83, and 100-120; these read YLVIAVGGSIGAILRYLTGVY, GTLIVNVVGSFILSFFMILFL, PLWRLFVAVGFCGSYTTLSSI, and LLNIALNFGLSFLSAFAGIVL. 2 residues coordinate Na(+): Gly75 and Thr78.

Belongs to the fluoride channel Fluc/FEX (TC 1.A.43) family.

It localises to the cell inner membrane. The catalysed reaction is fluoride(in) = fluoride(out). Its activity is regulated as follows. Na(+) is not transported, but it plays an essential structural role and its presence is essential for fluoride channel function. Fluoride-specific ion channel. Important for reducing fluoride concentration in the cell, thus reducing its toxicity. This Sulfurihydrogenibium sp. (strain YO3AOP1) protein is Fluoride-specific ion channel FluC.